The primary structure comprises 278 residues: Tryptophan synthase alpha chain (278 aa).

Residues E50 and D61 each act as proton acceptor in the active site.

Belongs to the TrpA family. Tetramer of two alpha and two beta chains.

It catalyses the reaction (1S,2R)-1-C-(indol-3-yl)glycerol 3-phosphate + L-serine = D-glyceraldehyde 3-phosphate + L-tryptophan + H2O. The protein operates within amino-acid biosynthesis; L-tryptophan biosynthesis; L-tryptophan from chorismate: step 5/5. Functionally, the alpha subunit is responsible for the aldol cleavage of indoleglycerol phosphate to indole and glyceraldehyde 3-phosphate. The polypeptide is Tryptophan synthase alpha chain (Nitrobacter hamburgensis (strain DSM 10229 / NCIMB 13809 / X14)).